A 251-amino-acid chain; its full sequence is Triosephosphate isomerase (251 aa).

9–11 (NWK) lines the substrate pocket. The active-site Electrophile is histidine 95. The active-site Proton acceptor is the glutamate 167. Substrate contacts are provided by residues glycine 173, serine 212, and 233-234 (GG).

Belongs to the triosephosphate isomerase family. Homodimer.

The protein resides in the cytoplasm. It catalyses the reaction D-glyceraldehyde 3-phosphate = dihydroxyacetone phosphate. The protein operates within carbohydrate biosynthesis; gluconeogenesis. Its pathway is carbohydrate degradation; glycolysis; D-glyceraldehyde 3-phosphate from glycerone phosphate: step 1/1. Involved in the gluconeogenesis. Catalyzes stereospecifically the conversion of dihydroxyacetone phosphate (DHAP) to D-glyceraldehyde-3-phosphate (G3P). This Pseudomonas savastanoi pv. phaseolicola (strain 1448A / Race 6) (Pseudomonas syringae pv. phaseolicola (strain 1448A / Race 6)) protein is Triosephosphate isomerase.